Here is a 538-residue protein sequence, read N- to C-terminus: Putative outer membrane porin BglH (538 aa).

An N-terminal signal peptide occupies residues 1–25; that stretch reads MFRRNIITSAILLMAPLAFSAQSLA.

It belongs to the porin LamB (TC 1.B.3) family.

It is found in the cell outer membrane. May be a sugar porin with a broad carbohydrate specificity. This Escherichia coli O6:K15:H31 (strain 536 / UPEC) protein is Putative outer membrane porin BglH (bglH).